A 550-amino-acid polypeptide reads, in one-letter code: Mycosin-2 (550 aa).

The signal sequence occupies residues 1-33 (MASPLNRPGLRAAAASAALTLVALSANVPAAQA). The interval 34 to 62 (IPPPSVDPAMVPADARPGPDQPMRRSNSC) is disordered. Positions 79 to 490 (GFNLVNISKA…YGLVDPVAAL (412 aa)) constitute a Peptidase S8 domain. Residues aspartate 103 and histidine 133 each act as charge relay system in the active site. The segment covering 168–190 (PPVTAAPAPPVEVPPPMPPPPPV) has biased composition (pro residues). Residues 168 to 236 (PPVTAAPAPP…PPPPPGAPDG (69 aa)) are disordered. Serine 435 (charge relay system) is an active-site residue. The helical transmembrane segment at 524–544 (NIAIGFVGAVATGVLAMAIGA) threads the bilayer.

The protein belongs to the peptidase S8 family.

It localises to the cell membrane. The protein is Mycosin-2 of Mycobacterium tuberculosis (strain ATCC 25618 / H37Rv).